Reading from the N-terminus, the 693-residue chain is Cleavage and polyadenylation specificity factor subunit 3-I (693 aa).

The HXHXDH motif motif lies at 81 to 86 (HFHIDH).

It belongs to the metallo-beta-lactamase superfamily. RNA-metabolizing metallo-beta-lactamase-like family. INTS11 subfamily. As to quaternary structure, component of the CPSF complex, at least composed of CPSF160, CPSF100, CPSF73-I, CPSF73-II, CPSF30, FY and FIPS5. Interacts with CLPS3, CPSF100, CPSF160 and FY. In terms of tissue distribution, highly expressed in carpels. Also detected in seedlings, roots, stems, leaves, flowers and siliques.

It localises to the nucleus. Functionally, component of the cleavage and polyadenylation specificity factor (CPSF) complex that play a key role in pre-mRNA 3'-end formation, recognizing the AAUAAA signal sequence and interacting with poly(A) polymerase and other factors to bring about cleavage and poly(A) addition. May function as mRNA 3'-end-processing endonuclease and also be involved in the histone 3'-end pre-mRNA processing. The sequence is that of Cleavage and polyadenylation specificity factor subunit 3-I (CPSF73-I) from Arabidopsis thaliana (Mouse-ear cress).